A 284-amino-acid chain; its full sequence is Bifunctional protein FolD (284 aa).

NADP(+) contacts are provided by residues 166 to 168 (GAS) and isoleucine 232.

This sequence belongs to the tetrahydrofolate dehydrogenase/cyclohydrolase family. Homodimer.

It carries out the reaction (6R)-5,10-methylene-5,6,7,8-tetrahydrofolate + NADP(+) = (6R)-5,10-methenyltetrahydrofolate + NADPH. It catalyses the reaction (6R)-5,10-methenyltetrahydrofolate + H2O = (6R)-10-formyltetrahydrofolate + H(+). The protein operates within one-carbon metabolism; tetrahydrofolate interconversion. In terms of biological role, catalyzes the oxidation of 5,10-methylenetetrahydrofolate to 5,10-methenyltetrahydrofolate and then the hydrolysis of 5,10-methenyltetrahydrofolate to 10-formyltetrahydrofolate. In Tolumonas auensis (strain DSM 9187 / NBRC 110442 / TA 4), this protein is Bifunctional protein FolD.